A 108-amino-acid chain; its full sequence is Flagellar hook-basal body complex protein FliE (108 aa).

The protein belongs to the FliE family.

The protein localises to the bacterial flagellum basal body. This Pseudomonas fluorescens (strain ATCC BAA-477 / NRRL B-23932 / Pf-5) protein is Flagellar hook-basal body complex protein FliE.